Consider the following 435-residue polypeptide: Phosphomethylpyrimidine synthase (435 aa).

Residues N67, M96, Y125, H163, 185-187 (SRG), 226-229 (DGLR), and E265 contribute to the substrate site. Residue H269 participates in Zn(2+) binding. Y292 is a binding site for substrate. H333 is a binding site for Zn(2+). Residues C408, C411, and C415 each coordinate [4Fe-4S] cluster.

The protein belongs to the ThiC family. [4Fe-4S] cluster serves as cofactor.

It carries out the reaction 5-amino-1-(5-phospho-beta-D-ribosyl)imidazole + S-adenosyl-L-methionine = 4-amino-2-methyl-5-(phosphooxymethyl)pyrimidine + CO + 5'-deoxyadenosine + formate + L-methionine + 3 H(+). Its pathway is cofactor biosynthesis; thiamine diphosphate biosynthesis. Its function is as follows. Catalyzes the synthesis of the hydroxymethylpyrimidine phosphate (HMP-P) moiety of thiamine from aminoimidazole ribotide (AIR) in a radical S-adenosyl-L-methionine (SAM)-dependent reaction. The sequence is that of Phosphomethylpyrimidine synthase from Thermus thermophilus (strain ATCC BAA-163 / DSM 7039 / HB27).